The following is a 694-amino-acid chain: MSGAIASSPAATLFLAGSSSSSPRRRRSRVSGVWWHLYGGTGLRLHWERRGLVRDGAVVCSASAAGGEDGVAKAKTKSAGSSKAVAVQGSTAKADHVEDSVSSPKYVKPAVAKQNGEVVSRATKSDAPVSKPKVDPSVPASKAEADGNAQAVESKAALDKKEDVGVAEPLEAKADAGGDAGAVSSADDSENKESGPLAGPNVMNVIVVASECSPFCKTGGLGDVVGALPKALARRGHRVMVVIPRYGEYAEAKDLGVRKRYRVAGQDSEVSYFHAFIDGVDFVFLEAPPFRHRHNDIYGGERFDVLKRMILFCKAAVEVPWFAPCGGSIYGDGNLVFIANDWHTALLPVYLKAYYRDNGLMQYTRSVLVIHNIAHQGRGPVDDFATMDLPEHYIDHFRLYDPVGGEHSNVFAAGLKMADRAVTVSHGYLWEIKTMDGGWGLHEIINHNDWKLQGIVNGIDMAEWNPEVDEHLQSDGYANYTFETLDTGKKQCKEALQRQLGLQVRDDVPLIGFIGRLDHQKGVDIIGDAMPWIAGQDVQVVMLGTGRPDLEEMLRRFESEHNDKVRGWVGFSVQLAHRITAGADVLLMPSRFEPCGLNQLYAMAYGTVPVVHAVGGLRDTVAPFDPFADTGLGWTFDRAEANRMIDALGHCLNTYRNYKESWRGLQARGMAQDLSWDHAAELYEDVLVKAKYQW.

Residues 1–15 (MSGAIASSPAATLFL) constitute a chloroplast transit peptide. Positions 93-197 (KADHVEDSVS…DSENKESGPL (105 aa)) are disordered. The segment covering 127–142 (APVSKPKVDPSVPASK) has biased composition (low complexity). The span at 156–176 (AALDKKEDVGVAEPLEAKADA) shows a compositional bias: basic and acidic residues. Low complexity predominate over residues 177-186 (GGDAGAVSSA). K217 serves as a coordination point for ADP-alpha-D-glucose.

This sequence belongs to the glycosyltransferase 1 family. Bacterial/plant glycogen synthase subfamily. Expressed in leaves and weakly in endosperm and roots.

It localises to the plastid. The protein localises to the amyloplast. It is found in the chloroplast. It carries out the reaction [(1-&gt;4)-alpha-D-glucosyl](n) + ADP-alpha-D-glucose = [(1-&gt;4)-alpha-D-glucosyl](n+1) + ADP + H(+). It functions in the pathway glycan biosynthesis; starch biosynthesis. May contribute to the deposition of transient starch in chloroplasts of leaves. In Oryza sativa subsp. japonica (Rice), this protein is Soluble starch synthase 2-2, chloroplastic/amyloplastic (SSII-2).